We begin with the raw amino-acid sequence, 728 residues long: E3 ubiquitin-protein ligase TRIM36 (728 aa).

The RING-type; degenerate zinc finger occupies C33–R84. 2 B box-type zinc fingers span residues A154–I192 and P207–M249. The Zn(2+) site is built by C212, H215, C235, and H241. Residues E271–N345 are a coiled coil. In terms of domain architecture, COS spans L356–F413. The region spanning V419–A510 is the Fibronectin type-III domain. Positions P508–K720 constitute a B30.2/SPRY domain.

The protein belongs to the TRIM/RBCC family. In terms of assembly, interacts with CENPH. In terms of tissue distribution, highly expressed in testis, prostate and brain. Weakly expressed in kidney, lung and heart. Expressed in fetal tissues.

The protein localises to the cytoplasm. It localises to the cytoplasmic vesicle. The protein resides in the secretory vesicle. Its subcellular location is the acrosome. It is found in the cytoskeleton. It carries out the reaction S-ubiquitinyl-[E2 ubiquitin-conjugating enzyme]-L-cysteine + [acceptor protein]-L-lysine = [E2 ubiquitin-conjugating enzyme]-L-cysteine + N(6)-ubiquitinyl-[acceptor protein]-L-lysine.. E3 ubiquitin-protein ligase which mediates ubiquitination and subsequent proteasomal degradation of target proteins. Involved in chromosome segregation and cell cycle regulation. May play a role in the acrosome reaction and fertilization. The chain is E3 ubiquitin-protein ligase TRIM36 (TRIM36) from Homo sapiens (Human).